Reading from the N-terminus, the 608-residue chain is AAA ATPase forming ring-shaped complexes (608 aa).

A coiled-coil region spans residues 45–79 (AQEYDAVLRRLSAAEATRDNMSRQIRGAGEKNRKL). 302-307 (GNGKTM) contacts ATP.

This sequence belongs to the AAA ATPase family. In terms of assembly, homohexamer. Assembles into a hexameric ring structure.

This Rothia mucilaginosa (strain DY-18) (Stomatococcus mucilaginosus) protein is AAA ATPase forming ring-shaped complexes.